A 338-amino-acid chain; its full sequence is Fructose-1,6-bisphosphatase class 1 (338 aa).

4 residues coordinate Mg(2+): Glu-92, Asp-114, Leu-116, and Asp-117. Residues 117 to 120 and Asn-210 each bind substrate; that span reads DGSS. Glu-284 is a Mg(2+) binding site.

The protein belongs to the FBPase class 1 family. In terms of assembly, homotetramer. It depends on Mg(2+) as a cofactor.

It localises to the cytoplasm. The catalysed reaction is beta-D-fructose 1,6-bisphosphate + H2O = beta-D-fructose 6-phosphate + phosphate. Its pathway is carbohydrate biosynthesis; gluconeogenesis. The chain is Fructose-1,6-bisphosphatase class 1 from Halorhodospira halophila (strain DSM 244 / SL1) (Ectothiorhodospira halophila (strain DSM 244 / SL1)).